The primary structure comprises 281 residues: Phosphate import ATP-binding protein PstB (281 aa).

The ABC transporter domain occupies 33 to 276 (FKIENLSLWY…PQLKRTRDYI (244 aa)). 67–74 (GPSGCGKS) lines the ATP pocket.

The protein belongs to the ABC transporter superfamily. Phosphate importer (TC 3.A.1.7) family. The complex is composed of two ATP-binding proteins (PstB), two transmembrane proteins (PstC and PstA) and a solute-binding protein (PstS).

The protein localises to the cell membrane. The catalysed reaction is phosphate(out) + ATP + H2O = ADP + 2 phosphate(in) + H(+). Functionally, part of the ABC transporter complex PstSACB involved in phosphate import. Responsible for energy coupling to the transport system. In Mycoplasma mobile (strain ATCC 43663 / 163K / NCTC 11711) (Mesomycoplasma mobile), this protein is Phosphate import ATP-binding protein PstB.